A 157-amino-acid chain; its full sequence is Large ribosomal subunit protein uL13m (157 aa).

Residues 1 to 29 constitute a mitochondrion transit peptide; that stretch reads MSTLNGQTALAYAKVWHHVSAKNVPLGRL.

The protein belongs to the universal ribosomal protein uL13 family. In terms of assembly, component of the mitochondrial large ribosomal subunit (mt-LSU). Mature yeast 74S mitochondrial ribosomes consist of a small (37S) and a large (54S) subunit. The 37S small subunit contains a 15S ribosomal RNA (15S mt-rRNA) and at least 32 different proteins. The 54S large subunit contains a 21S rRNA (21S mt-rRNA) and at least 45 different proteins.

It localises to the mitochondrion. Its function is as follows. Component of the mitochondrial ribosome (mitoribosome), a dedicated translation machinery responsible for the synthesis of mitochondrial genome-encoded proteins, including at least some of the essential transmembrane subunits of the mitochondrial respiratory chain. The mitoribosomes are attached to the mitochondrial inner membrane and translation products are cotranslationally integrated into the membrane. In Schizosaccharomyces pombe (strain 972 / ATCC 24843) (Fission yeast), this protein is Large ribosomal subunit protein uL13m.